Reading from the N-terminus, the 442-residue chain is D-serine dehydratase 2 (442 aa).

Lys-118 is subject to N6-(pyridoxal phosphate)lysine.

This sequence belongs to the serine/threonine dehydratase family. DsdA subfamily. In terms of assembly, monomer. Pyridoxal 5'-phosphate serves as cofactor.

It catalyses the reaction D-serine = pyruvate + NH4(+). The sequence is that of D-serine dehydratase 2 from Escherichia coli O6:K15:H31 (strain 536 / UPEC).